Here is a 225-residue protein sequence, read N- to C-terminus: Dehydrin DHN4 (225 aa).

Residues 1-78 (MEYQGQQHGR…EDDGMGGRRK (78 aa)) form a disordered region. Positions 21 to 39 (HGVGTGMGTHGGVGTGAAA) are enriched in gly residues. 5 tandem repeats follow at residues 105-118 (YGQQGTGMAGTGGT), 119-136 (YGQQGHTGMTGMGATDGT), 137-159 (YGQQGHTGMAGTGAHGTAATGGT), 160-178 (YGQQGHTGMTGTGMHGTGG), and 179-199 (TYGQQGHTGMTGTGMHGTGGT). The segment at 105–199 (YGQQGTGMAG…GTGMHGTGGT (95 aa)) is 5 X approximate tandem repeats.

Belongs to the plant dehydrin family.

The protein is Dehydrin DHN4 (DHN4) of Hordeum vulgare (Barley).